The following is a 102-amino-acid chain: MMEIGLNHYLVLSTILFAIGLVGVMRRKNLLMLFFATEILLNSVNISFAAISHYYGDLTGQMFAFFVIAIAASEVAVGLGLLIVWHKKHNNIDLDNMSTMRG.

A run of 3 helical transmembrane segments spans residues 4–24 (IGLN…LVGV), 31–51 (LMLF…FAAI), and 65–85 (FFVI…LIVW).

The protein belongs to the complex I subunit 4L family. As to quaternary structure, NDH-1 is composed of 14 different subunits. Subunits NuoA, H, J, K, L, M, N constitute the membrane sector of the complex.

The protein resides in the cell inner membrane. The enzyme catalyses a quinone + NADH + 5 H(+)(in) = a quinol + NAD(+) + 4 H(+)(out). Its function is as follows. NDH-1 shuttles electrons from NADH, via FMN and iron-sulfur (Fe-S) centers, to quinones in the respiratory chain. The immediate electron acceptor for the enzyme in this species is believed to be ubiquinone. Couples the redox reaction to proton translocation (for every two electrons transferred, four hydrogen ions are translocated across the cytoplasmic membrane), and thus conserves the redox energy in a proton gradient. The polypeptide is NADH-quinone oxidoreductase subunit K (Sulfurimonas denitrificans (strain ATCC 33889 / DSM 1251) (Thiomicrospira denitrificans (strain ATCC 33889 / DSM 1251))).